The sequence spans 566 residues: Urease subunit alpha (566 aa).

Residues 128–566 enclose the Urease domain; that stretch reads GGVDTHIHFI…LPMAQRYFLF (439 aa). Histidine 133, histidine 135, and lysine 216 together coordinate Ni(2+). Residue lysine 216 is modified to N6-carboxylysine. Histidine 218 is a binding site for substrate. The Ni(2+) site is built by histidine 245 and histidine 271. Histidine 319 acts as the Proton donor in catalysis. A Ni(2+)-binding site is contributed by aspartate 359.

This sequence belongs to the metallo-dependent hydrolases superfamily. Urease alpha subunit family. As to quaternary structure, may form a heterohexamer of 3 UreC (alpha) and 3 UreAB (gamma/beta) subunits. May also form a heterotrimer of UreA (gamma), UreB (beta) and UreC (alpha) subunits. Three heterotrimers associate to form the active enzyme. Requires Ni cation as cofactor. Carboxylation allows a single lysine to coordinate two nickel ions.

The protein resides in the cytoplasm. It carries out the reaction urea + 2 H2O + H(+) = hydrogencarbonate + 2 NH4(+). It participates in nitrogen metabolism; urea degradation; CO(2) and NH(3) from urea (urease route): step 1/1. The sequence is that of Urease subunit alpha from Pseudomonas savastanoi pv. phaseolicola (strain 1448A / Race 6) (Pseudomonas syringae pv. phaseolicola (strain 1448A / Race 6)).